A 132-amino-acid polypeptide reads, in one-letter code: Small ribosomal subunit protein uS13 (132 aa).

Positions 106-132 (PVRGQVTQKNARTRKGPRKTVAGKKGK) are disordered. Over residues 116–132 (ARTRKGPRKTVAGKKGK) the composition is skewed to basic residues.

It belongs to the universal ribosomal protein uS13 family. Part of the 30S ribosomal subunit. Forms a loose heterodimer with protein S19. Forms two bridges to the 50S subunit in the 70S ribosome.

Located at the top of the head of the 30S subunit, it contacts several helices of the 16S rRNA. In the 70S ribosome it contacts the 23S rRNA (bridge B1a) and protein L5 of the 50S subunit (bridge B1b), connecting the 2 subunits; these bridges are implicated in subunit movement. Contacts the tRNAs in the A and P-sites. In Mycoplasmopsis pulmonis (strain UAB CTIP) (Mycoplasma pulmonis), this protein is Small ribosomal subunit protein uS13.